A 538-amino-acid polypeptide reads, in one-letter code: Eukaryotic translation initiation factor 3 subunit L (538 aa).

In terms of domain architecture, PCI spans 305 to 513 (TFSDILLYIQ…IHIADTKVSH (209 aa)).

The protein belongs to the eIF-3 subunit L family. As to quaternary structure, component of the eukaryotic translation initiation factor 3 (eIF-3) complex. The eIF-3 complex interacts with pix.

Its subcellular location is the cytoplasm. Functionally, component of the eukaryotic translation initiation factor 3 (eIF-3) complex, which is involved in protein synthesis of a specialized repertoire of mRNAs and, together with other initiation factors, stimulates binding of mRNA and methionyl-tRNAi to the 40S ribosome. The eIF-3 complex specifically targets and initiates translation of a subset of mRNAs involved in cell proliferation. In Drosophila virilis (Fruit fly), this protein is Eukaryotic translation initiation factor 3 subunit L.